The chain runs to 375 residues: 23S rRNA (uracil(747)-C(5))-methyltransferase RlmC (375 aa).

[4Fe-4S] cluster contacts are provided by cysteine 3, cysteine 11, cysteine 14, and cysteine 87. S-adenosyl-L-methionine-binding residues include glutamine 212, phenylalanine 241, glutamate 262, and asparagine 307. Residue cysteine 334 is the Nucleophile of the active site.

The protein belongs to the class I-like SAM-binding methyltransferase superfamily. RNA M5U methyltransferase family. RlmC subfamily.

The catalysed reaction is uridine(747) in 23S rRNA + S-adenosyl-L-methionine = 5-methyluridine(747) in 23S rRNA + S-adenosyl-L-homocysteine + H(+). In terms of biological role, catalyzes the formation of 5-methyl-uridine at position 747 (m5U747) in 23S rRNA. This chain is 23S rRNA (uracil(747)-C(5))-methyltransferase RlmC, found in Salmonella paratyphi A (strain ATCC 9150 / SARB42).